Here is a 793-residue protein sequence, read N- to C-terminus: Plakophilin-3 (793 aa).

The disordered stretch occupies residues 56–82 (QLGQQPRHNGPAEPDGAAEAARGASRA). The span at 66-82 (PAEPDGAAEAARGASRA) shows a compositional bias: low complexity. Residue arginine 81 is modified to Omega-N-methylarginine. Phosphoserine is present on residues serine 122, serine 179, and serine 182. A Phosphotyrosine modification is found at tyrosine 194. A disordered region spans residues 221-240 (SSSRAGGLDWPEATEGPPSR). Serine 239 is modified (phosphoserine). Threonine 249 bears the Phosphothreonine mark. Arginine 260 bears the Omega-N-methylarginine mark. Serine 282, serine 310, serine 311, and serine 328 each carry phosphoserine. Positions 282 to 285 (SLSL) are required for interaction with SFN. Residues 291–720 (LPDMRGLDSY…ADVLINIIAV (430 aa)) are required for interaction with GSK3B. 8 ARM repeats span residues 302–345 (GHRT…HKCY), 348–387 (AAAK…NLVY), 390–429 (ADNK…NLSS), 446–484 (TDLV…NLSS), 488–533 (ATRQ…NLSY), 592–633 (PKGL…NITA), 641–680 (VLSR…NLSR), and 685–726 (KDEM…NLVV). The tract at residues 513–793 (VGKCEDKSVE…GYRKEDFLGP (281 aa)) is required for binding to PKP2 mRNA.

The protein belongs to the beta-catenin family. As to quaternary structure, found in a complex composed of CDH1, RAP1A and PKP3; PKP3 acts as a scaffold protein within the complex, the complex is required for CDH1 localization to mature desmosome cell junctions. Interacts with FXR1; the interaction facilitates the binding of PKP3 to PKP2 mRNA. Interacts (via ARM repeats) with GSK3B; the interaction may be involved in PKP3 protein degradation. Interacts with hyperphosphorylated and hypophosphorylated RB1; the interaction inhibits RB1 interaction with and repression of the transcription factor E2F1, potentially via sequestering RB1 to the cytoplasm. Interacts with CDKN1A; the interaction sequesters CDKN1A to the cytoplasm thereby repressing its role as an inhibitor of CDK4- and CDK6-driven RB1 phosphorylation. Interacts (via N-terminus) with SFN; the interaction maintains the cytoplasmic pool of PKP3, facilitates PKP3 exchange at desmosomes and restricts PKP3 localization to existing desmosome cell junctions. Interacts (via N-terminus) with SFN; the interaction maintains the cytoplasmic pool of PKP3 and restricts PKP3 localization to existing desmosome cell junctions. Interacts (via N-terminus) with JUP; the interaction is required for PKP3 localization to desmosome cell-cell junctions. Phosphorylated at Ser-282 when localized to the cytoplasm, PKP3 at desmosome cell junctions is not phosphorylated. Phosphorylation at Try-194 by SRC is induced by reactive oxygen species and potentially acts as a release mechanism from desmosome cell-cell junctions.

It is found in the nucleus. Its subcellular location is the cell junction. It localises to the desmosome. The protein resides in the cytoplasm. The protein localises to the cell membrane. It is found in the adherens junction. Its function is as follows. A component of desmosome cell-cell junctions which are required for positive regulation of cellular adhesion. Required for the localization of DSG2, DSP and PKP2 to mature desmosome junctions. May also play a role in the maintenance of DSG3 protein abundance in keratinocytes. Required for the formation of DSP-containing desmosome precursors in the cytoplasm during desmosome assembly. Also regulates the accumulation of CDH1 to mature desmosome junctions, via cAMP-dependent signaling and its interaction with activated RAP1A. Positively regulates the stabilization of PKP2 mRNA and therefore protein abundance, via its interaction with FXR1, may also regulate the protein abundance of DSP via the same mechanism. May also regulate the protein abundance of the desmosome component PKP1. Required for the organization of desmosome junctions at intercellular borders between basal keratinocytes of the epidermis, as a result plays a role in maintenance of the dermal barrier and regulation of the dermal inflammatory response. Required during epidermal keratinocyte differentiation for cell adherence at tricellular cell-cell contacts, via regulation of the timely formation of adherens junctions and desmosomes in a calcium-dependent manner, and may also play a role in the organization of the intracellular actin fiber belt. Acts as a negative regulator of the inflammatory response in hematopoietic cells of the skin and intestine, via modulation of proinflammatory cytokine production. Important for epithelial barrier maintenance in the intestine to reduce intestinal permeability, thereby plays a role in protection from intestinal-derived endotoxemia. Required for the development of hair follicles, via a role in the regulation of inner root sheaf length, correct alignment and anterior-posterior polarity of hair follicles. Promotes proliferation and cell-cycle G1/S phase transition of keratinocytes. Promotes E2F1-driven transcription of G1/S phase promoting genes by acting to release E2F1 from its inhibitory interaction with RB1, via sequestering RB1 and CDKN1A to the cytoplasm and thereby increasing CDK4- and CDK6-driven phosphorylation of RB1. May act as a scaffold protein to facilitate MAPK phosphorylation of RPS6KA protein family members and subsequently promote downstream EGFR signaling. May play a role in the positive regulation of transcription of Wnt-mediated TCF-responsive target genes. This Bos taurus (Bovine) protein is Plakophilin-3 (PKP3).